The following is a 396-amino-acid chain: Elongation factor Tu (396 aa).

Residues 11–205 (KPHVNIGTIG…TVDEYIPTPE (195 aa)) form the tr-type G domain. The segment at 20-27 (GHVDHGKT) is G1. Position 20–27 (20–27 (GHVDHGKT)) interacts with GTP. Residue Thr-27 coordinates Mg(2+). Residues 61–65 (GITIN) are G2. A G3 region spans residues 82-85 (DAPG). Residues 82–86 (DAPGH) and 137–140 (NKCD) contribute to the GTP site. Residues 137-140 (NKCD) are G4. Positions 175 to 177 (SAL) are G5.

Belongs to the TRAFAC class translation factor GTPase superfamily. Classic translation factor GTPase family. EF-Tu/EF-1A subfamily. Monomer.

Its subcellular location is the cytoplasm. The enzyme catalyses GTP + H2O = GDP + phosphate + H(+). Functionally, GTP hydrolase that promotes the GTP-dependent binding of aminoacyl-tRNA to the A-site of ribosomes during protein biosynthesis. This is Elongation factor Tu from Lactobacillus helveticus (strain DPC 4571).